Reading from the N-terminus, the 1318-residue chain is Meiotically up-regulated gene 79 protein (1318 aa).

3 disordered regions span residues 177 to 198 (PVNS…SGSY), 208 to 227 (EEEL…IVVT), and 360 to 387 (PQAL…PPKG). The span at 364–384 (AAAESPTTKAPTTKAPTSEAP) shows a compositional bias: low complexity. Residues 1049–1158 (MISYKKMVLS…WIHSLNFNAA (110 aa)) enclose the PH domain.

The protein resides in the nucleus. Its function is as follows. Appears to have a role in sporulation. This Schizosaccharomyces pombe (strain 972 / ATCC 24843) (Fission yeast) protein is Meiotically up-regulated gene 79 protein (mug79).